Consider the following 331-residue polypeptide: Phenylalanine--tRNA ligase alpha subunit (331 aa).

Glu252 is a Mg(2+) binding site.

It belongs to the class-II aminoacyl-tRNA synthetase family. Phe-tRNA synthetase alpha subunit type 1 subfamily. In terms of assembly, tetramer of two alpha and two beta subunits. It depends on Mg(2+) as a cofactor.

Its subcellular location is the cytoplasm. The catalysed reaction is tRNA(Phe) + L-phenylalanine + ATP = L-phenylalanyl-tRNA(Phe) + AMP + diphosphate + H(+). The protein is Phenylalanine--tRNA ligase alpha subunit of Xanthomonas euvesicatoria pv. vesicatoria (strain 85-10) (Xanthomonas campestris pv. vesicatoria).